A 374-amino-acid polypeptide reads, in one-letter code: MTRFSFKIHATDGKARTGAIQMMRGEIRTPAFMPVGTAATVKAMKVEDVRASGADIILGNTYHLMLRPGAERVARLGGLHKFMGWDRPILTDSGGYQVMSLSDLRKITEEGVTFASHLDGSRHLLSPERSMEIQRLLGSDIVMCFDECPRADQPREVIARSMEMSMRWARRSRDAFDAGGEHAERSALFGIQQGALDEGLRKTSADALTDIGFDGYAIGGLAVGEGQEAMFATLDFAPQQLPADRPRYLMGVGKPDDLVGAVERGVDMFDCVLPTRSGRNGQAFTWNGPLNMRNARHAEDTGPLDERCPCPTCTKYSRAYLHHLHKSGEMLGAMLLTEHNLWFYQQLMAGMRAAIAEGRFAAFAADFRRDYFAR.

Asp92 functions as the Proton acceptor in the catalytic mechanism. Residues 92–96 (DSGGY), Asp146, Gln193, and Gly220 each bind substrate. Positions 251–257 (GVGKPDD) are RNA binding. Asp270 acts as the Nucleophile in catalysis. The segment at 275-279 (TRSGR) is RNA binding; important for wobble base 34 recognition. Zn(2+) is bound by residues Cys308, Cys310, Cys313, and His339.

The protein belongs to the queuine tRNA-ribosyltransferase family. In terms of assembly, homodimer. Within each dimer, one monomer is responsible for RNA recognition and catalysis, while the other monomer binds to the replacement base PreQ1. The cofactor is Zn(2+).

The enzyme catalyses 7-aminomethyl-7-carbaguanine + guanosine(34) in tRNA = 7-aminomethyl-7-carbaguanosine(34) in tRNA + guanine. The protein operates within tRNA modification; tRNA-queuosine biosynthesis. Functionally, catalyzes the base-exchange of a guanine (G) residue with the queuine precursor 7-aminomethyl-7-deazaguanine (PreQ1) at position 34 (anticodon wobble position) in tRNAs with GU(N) anticodons (tRNA-Asp, -Asn, -His and -Tyr). Catalysis occurs through a double-displacement mechanism. The nucleophile active site attacks the C1' of nucleotide 34 to detach the guanine base from the RNA, forming a covalent enzyme-RNA intermediate. The proton acceptor active site deprotonates the incoming PreQ1, allowing a nucleophilic attack on the C1' of the ribose to form the product. After dissociation, two additional enzymatic reactions on the tRNA convert PreQ1 to queuine (Q), resulting in the hypermodified nucleoside queuosine (7-(((4,5-cis-dihydroxy-2-cyclopenten-1-yl)amino)methyl)-7-deazaguanosine). The polypeptide is Queuine tRNA-ribosyltransferase (Novosphingobium aromaticivorans (strain ATCC 700278 / DSM 12444 / CCUG 56034 / CIP 105152 / NBRC 16084 / F199)).